We begin with the raw amino-acid sequence, 117 residues long: UPF0122 protein Cthe_0771 (117 aa).

This sequence belongs to the UPF0122 family.

Functionally, might take part in the signal recognition particle (SRP) pathway. This is inferred from the conservation of its genetic proximity to ftsY/ffh. May be a regulatory protein. The chain is UPF0122 protein Cthe_0771 from Acetivibrio thermocellus (strain ATCC 27405 / DSM 1237 / JCM 9322 / NBRC 103400 / NCIMB 10682 / NRRL B-4536 / VPI 7372) (Clostridium thermocellum).